Reading from the N-terminus, the 634-residue chain is Nucleoside triphosphatase I (634 aa).

Residues 41-203 (FLGLDSMNSL…ALLVNLLRPG (163 aa)) form the Helicase ATP-binding domain. 54-61 (QETGVGKT) contacts ATP. The DEXH box motif lies at 140 to 143 (DECH). The region spanning 355–531 (SLYQALYEHS…EFSQLYRVLK (177 aa)) is the Helicase C-terminal domain. The binding to the cap-specific mRNA (nucleoside-2'-O-)-methyltransferase stretch occupies residues 456–523 (DIFILDMTWN…EIIQNKAREF (68 aa)).

This sequence belongs to the helicase family. NPH I subfamily. In terms of assembly, monomer. Interacts (via C-terminus) with RAP94 (via N-terminus). Interacts with the cap-specific mRNA (nucleoside-2'-O-)-methyltransferase.

Its subcellular location is the virion. It catalyses the reaction a ribonucleoside 5'-triphosphate + H2O = a ribonucleoside 5'-diphosphate + phosphate + H(+). In terms of biological role, DNA-dependent ATPase required for providing the needed energy to achieve the termination of early transcripts. Acts in concert with the RAP94 subunit of the virion RNA polymerase and the capping enzyme/VTF to catalyze release of UUUUUNU-containing nascent RNA from the elongation complex. NPH-I must bind ssDNA in order to exhibit ATPase activity. The protein is Nucleoside triphosphatase I (NPH1) of Homo sapiens (Human).